The chain runs to 397 residues: Acetate kinase (397 aa).

Residue N8 participates in Mg(2+) binding. K15 provides a ligand contact to ATP. R89 is a binding site for substrate. D146 acts as the Proton donor/acceptor in catalysis. Residues H206–G210, D281–R283, and G329–N333 each bind ATP. E382 provides a ligand contact to Mg(2+).

Belongs to the acetokinase family. In terms of assembly, homodimer. The cofactor is Mg(2+). It depends on Mn(2+) as a cofactor.

The protein resides in the cytoplasm. The enzyme catalyses acetate + ATP = acetyl phosphate + ADP. The protein operates within metabolic intermediate biosynthesis; acetyl-CoA biosynthesis; acetyl-CoA from acetate: step 1/2. Its function is as follows. Catalyzes the formation of acetyl phosphate from acetate and ATP. Can also catalyze the reverse reaction. The sequence is that of Acetate kinase from Bacillus cereus (strain ATCC 14579 / DSM 31 / CCUG 7414 / JCM 2152 / NBRC 15305 / NCIMB 9373 / NCTC 2599 / NRRL B-3711).